The sequence spans 487 residues: Glutamyl-tRNA(Gln) amidotransferase subunit A (487 aa).

Catalysis depends on charge relay system residues K79 and S154. The active-site Acyl-ester intermediate is the S178.

This sequence belongs to the amidase family. GatA subfamily. In terms of assembly, heterotrimer of A, B and C subunits.

It carries out the reaction L-glutamyl-tRNA(Gln) + L-glutamine + ATP + H2O = L-glutaminyl-tRNA(Gln) + L-glutamate + ADP + phosphate + H(+). Its function is as follows. Allows the formation of correctly charged Gln-tRNA(Gln) through the transamidation of misacylated Glu-tRNA(Gln) in organisms which lack glutaminyl-tRNA synthetase. The reaction takes place in the presence of glutamine and ATP through an activated gamma-phospho-Glu-tRNA(Gln). The chain is Glutamyl-tRNA(Gln) amidotransferase subunit A from Roseiflexus sp. (strain RS-1).